Reading from the N-terminus, the 506-residue chain is Maturase K (506 aa).

This sequence belongs to the intron maturase 2 family. MatK subfamily.

Its subcellular location is the plastid. It is found in the chloroplast. Functionally, usually encoded in the trnK tRNA gene intron. Probably assists in splicing its own and other chloroplast group II introns. The protein is Maturase K of Trifolium wormskioldii (Cows clover).